Here is a 933-residue protein sequence, read N- to C-terminus: Exosome complex exonuclease RRP44 homolog A (933 aa).

The 114-residue stretch at 50–163 (KIIVVDTNVV…LVTNDRENKR (114 aa)) folds into the PINc domain. In terms of domain architecture, CSD1 spans 217–321 (QEHKPMSEIT…NVDDAPRTSN (105 aa)). The segment at 296–336 (AEEDDEEDDTVHLAPDNVDDAPRTSNLSHETSGDKNAAPVR) is disordered. A CSD2 domain is found at 371–438 (ALFVSKDRRI…ETEVVLIEND (68 aa)). Residues 469–798 (RQDLRHLLVF…FVHRLLAASL (330 aa)) form the RNB domain. Mg(2+) contacts are provided by D481 and D490.

Belongs to the RNR ribonuclease family. In terms of assembly, probable component of the RNA exosome complex. It depends on Mg(2+) as a cofactor.

The protein localises to the nucleus. Catalytic component of the RNA exosome complex which has 3'-&gt;5' exoribonuclease activity and participates in a multitude of cellular RNA processing and degradation events. Required for 5.8S rRNA intermediate processing and the degradation of 5' external transcribed spacer (5' ETS), a maturation by-product of rRNA synthesis. Is not involved in the degradation of turnip crinkle virus (TCV) RNA and significant virus resistance. Required for normal development of female gametophytes and early embryogenesis. The polypeptide is Exosome complex exonuclease RRP44 homolog A (Arabidopsis thaliana (Mouse-ear cress)).